The following is a 72-amino-acid chain: Translation initiation factor IF-1 (72 aa).

The S1-like domain maps to 1–72 (MSKQDVIEFD…TKGRITYRGK (72 aa)).

The protein belongs to the IF-1 family. As to quaternary structure, component of the 30S ribosomal translation pre-initiation complex which assembles on the 30S ribosome in the order IF-2 and IF-3, IF-1 and N-formylmethionyl-tRNA(fMet); mRNA recruitment can occur at any time during PIC assembly.

It is found in the cytoplasm. One of the essential components for the initiation of protein synthesis. Stabilizes the binding of IF-2 and IF-3 on the 30S subunit to which N-formylmethionyl-tRNA(fMet) subsequently binds. Helps modulate mRNA selection, yielding the 30S pre-initiation complex (PIC). Upon addition of the 50S ribosomal subunit IF-1, IF-2 and IF-3 are released leaving the mature 70S translation initiation complex. The polypeptide is Translation initiation factor IF-1 (Hydrogenovibrio crunogenus (strain DSM 25203 / XCL-2) (Thiomicrospira crunogena)).